The primary structure comprises 345 residues: Cysteinyl leukotriene receptor 2 (345 aa).

Residues 1–43 (MERKLMSLLPSISLSEMEPNSTLGNHNSNRSCTTENFKREFYP) lie on the Extracellular side of the membrane. N20 and N29 each carry an N-linked (GlcNAc...) asparagine glycan. A helical transmembrane segment spans residues 44–64 (IVYLVIFIWGALGNGFSIYVF). Over 65-73 (LKPYKKSTS) the chain is Cytoplasmic. A helical transmembrane segment spans residues 74-94 (VNVFMLNLAISDLLFTITLPF). Over 95-124 (RVDYYLRGSNXIFGDTPCRIMSYSMYVNMY) the chain is Extracellular. Residues C112 and C188 are joined by a disulfide bond. The helical transmembrane segment at 125–145 (SSIYFLTVLSVVRFLATVHPF) threads the bilayer. Residues 146 to 154 (RLLHTTSIK) lie on the Cytoplasmic side of the membrane. A helical transmembrane segment spans residues 155–175 (NAWILCGVIWIFIMASSTVLL). Over 176–205 (KNGSEQKDNVTLCLELNSNKVTKLKTMNYV) the chain is Extracellular. 2 N-linked (GlcNAc...) asparagine glycosylation sites follow: N177 and N184. Residues 206-226 (ALVVGFVLPFGTLSICYLLII) traverse the membrane as a helical segment. The Cytoplasmic portion of the chain corresponds to 227–246 (RALLKVEVPESGLRLSHRKA). Residues 247-267 (LITVIIALIIFLLCFLPYHVL) traverse the membrane as a helical segment. At 268 to 287 (RTLHLLEWKADKCKDRLHKA) the chain is on the extracellular side. The chain crosses the membrane as a helical span at residues 288–308 (VAVTLALAAANSCFNPFLYYF). Topologically, residues 309–345 (AGENFKDRLKSALRKGRPQKTRCGFSVCVWLKKETRV) are cytoplasmic.

The protein belongs to the G-protein coupled receptor 1 family.

It is found in the cell membrane. Receptor for cysteinyl leukotrienes. The response is mediated via a G-protein that activates a phosphatidylinositol-calcium second messenger system. This chain is Cysteinyl leukotriene receptor 2 (CYSLTR2), found in Sus scrofa (Pig).